The sequence spans 405 residues: DNA polymerase processivity factor (405 aa).

The disordered stretch occupies residues 354 to 376 (GAGVKRRASEEEESDQPPKKLFP). The Bipartite nuclear localization signal motif lies at 358 to 373 (KRRASEEEESDQPPKK).

This sequence belongs to the herpesviridae DNA polymerase processivity factor family. Interacts with the DNA polymerase catalytic subunit. Interacts with the origin-binding protein.

The protein resides in the host nucleus. Its function is as follows. Plays an essential role in viral DNA replication by acting as the polymerase accessory subunit. Associates with the viral polymerase to increase its processivity and forms high-affinity direct interactions with DNA. Facilitates the origin-binding protein loading onto DNA thus increasing its ability to assemble into a functional complex capable of unwinding duplex DNA. The protein is DNA polymerase processivity factor of Equine herpesvirus 1 (strain Ab4p) (EHV-1).